We begin with the raw amino-acid sequence, 346 residues long: MSTRLIIPANFSYDDPLPFTCNQDSHVMLSILEYLVQATYLSVSAVLNSMIVYTIFRCKGKHSYRRNPFFVLYAAEAVMNVYSCVIEVLFGRLIIYMTPLCPALSPFFFTPSILTKLYFLLNHYCLAFKTLSQIAISFNRMTCVIFPVHHFKLWQNILAPVLVSLFVLPLGVTWNILVSRVYVNPNGAGFSVNYRDAVAWANISFLHLFHCIPCLFLMIVFFLASIFGLTMLENRLRSAERSLIIFTMTLGVETMLFAIAQIYFAFLAGYLPGIRPLMLLISFNVFDVLYVYSPIALILMNRQLRRDIFHLKGDDPGFGFTKFPVILVEMISDSSPHLLIINLQLV.

7 helical membrane passes run 27–47, 69–89, 106–128, 157–177, 212–232, 254–274, and 279–299; these read VMLS…SAVL, FFVL…IEVL, PFFF…CLAF, ILAP…WNIL, IPCL…LTML, TMLF…LPGI, and LLIS…ALIL.

The protein belongs to the nematode receptor-like protein srg family.

It localises to the membrane. The polypeptide is Serpentine receptor class gamma-20 (srg-20) (Caenorhabditis elegans).